Consider the following 544-residue polypeptide: CTP synthase (544 aa).

The interval 1–267 (MTKFVFVTGG…AQRVLEILNL (267 aa)) is amidoligase domain. Residue Ser13 participates in CTP binding. Ser13 is a UTP binding site. 14–19 (SIGKGI) is a binding site for ATP. Tyr54 serves as a coordination point for L-glutamine. Asp71 is a binding site for ATP. Positions 71 and 141 each coordinate Mg(2+). Residues 148-150 (DIE), 188-193 (KTKPTQ), and Lys224 contribute to the CTP site. Residues 188-193 (KTKPTQ) and Lys224 contribute to the UTP site. The 243-residue stretch at 292-534 (EIAIVGKYVR…IEAALRSRPQ (243 aa)) folds into the Glutamine amidotransferase type-1 domain. Gly354 provides a ligand contact to L-glutamine. Cys381 functions as the Nucleophile; for glutamine hydrolysis in the catalytic mechanism. L-glutamine-binding positions include 382-385 (LGMQ), Glu405, and Arg462. Active-site residues include His507 and Glu509.

It belongs to the CTP synthase family. In terms of assembly, homotetramer.

The enzyme catalyses UTP + L-glutamine + ATP + H2O = CTP + L-glutamate + ADP + phosphate + 2 H(+). It catalyses the reaction L-glutamine + H2O = L-glutamate + NH4(+). The catalysed reaction is UTP + NH4(+) + ATP = CTP + ADP + phosphate + 2 H(+). Its pathway is pyrimidine metabolism; CTP biosynthesis via de novo pathway; CTP from UDP: step 2/2. Its activity is regulated as follows. Allosterically activated by GTP, when glutamine is the substrate; GTP has no effect on the reaction when ammonia is the substrate. The allosteric effector GTP functions by stabilizing the protein conformation that binds the tetrahedral intermediate(s) formed during glutamine hydrolysis. Inhibited by the product CTP, via allosteric rather than competitive inhibition. In terms of biological role, catalyzes the ATP-dependent amination of UTP to CTP with either L-glutamine or ammonia as the source of nitrogen. Regulates intracellular CTP levels through interactions with the four ribonucleotide triphosphates. In Synechococcus sp. (strain JA-2-3B'a(2-13)) (Cyanobacteria bacterium Yellowstone B-Prime), this protein is CTP synthase.